The chain runs to 200 residues: MVDLRIPAALKLGPKLKRSFFARSVHEVAPDLIGATLLVEGSGGVIVEVEAYHHTDPAAHSFGGQTPRNAVMFGPPGVAYVYRSYGIHWCLNVVCEEAGSASAVLIRALVPTDGLALMRRRRGVEDERALCSGPGKLAQALGVTIAHNGLKLDAPPFALHGRLAAPEIVAGPRIGISKAAELPWRYGLRGSKFVSKPFAE.

This sequence belongs to the DNA glycosylase MPG family.

In Rhodopseudomonas palustris (strain BisB18), this protein is Putative 3-methyladenine DNA glycosylase.